The primary structure comprises 385 residues: FAD-dependent monooxygenase verC2 (385 aa).

FAD is bound by residues arginine 27, aspartate 227, and alanine 240. N-linked (GlcNAc...) asparagine glycosylation occurs at asparagine 320. Residues 365–385 (WKTTIMFIALLTIVVLIYSFI) traverse the membrane as a helical segment.

Belongs to the paxM FAD-dependent monooxygenase family. It depends on FAD as a cofactor.

It localises to the membrane. It functions in the pathway secondary metabolite biosynthesis; terpenoid biosynthesis. Its pathway is mycotoxin biosynthesis. In terms of biological role, FAD-dependent monooxygenase; part of the gene cluster that mediates the biosynthesis of the neurotoxin verrucosidin, a methylated alpha-pyrone polyketide that inhibits oxidative phosphorylation in mitochondria and thereby causes neurological diseases. The carbon backbone of verrucosidin is synthesized by the HR-PKS verA, and further modified by the other verrucodidin cluster enzymes. The sequence is that of FAD-dependent monooxygenase verC2 from Penicillium polonicum.